Consider the following 503-residue polypeptide: ATP synthase subunit alpha (503 aa).

170 to 177 serves as a coordination point for ATP; that stretch reads GDKQTGKT.

Belongs to the ATPase alpha/beta chains family. As to quaternary structure, F-type ATPases have 2 components, CF(1) - the catalytic core - and CF(0) - the membrane proton channel. CF(1) has five subunits: alpha(3), beta(3), gamma(1), delta(1), epsilon(1). CF(0) has three main subunits: a(1), b(2) and c(9-12). The alpha and beta chains form an alternating ring which encloses part of the gamma chain. CF(1) is attached to CF(0) by a central stalk formed by the gamma and epsilon chains, while a peripheral stalk is formed by the delta and b chains.

The protein resides in the cell inner membrane. The enzyme catalyses ATP + H2O + 4 H(+)(in) = ADP + phosphate + 5 H(+)(out). In terms of biological role, produces ATP from ADP in the presence of a proton gradient across the membrane. The alpha chain is a regulatory subunit. The protein is ATP synthase subunit alpha of Helicobacter pylori (strain G27).